Here is a 392-residue protein sequence, read N- to C-terminus: Branched-chain-amino-acid aminotransferase, mitochondrial (392 aa).

The transit peptide at Met-1 to Tyr-27 directs the protein to the mitochondrion. Tyr-168 is a substrate binding site. At Lys-229 the chain carries N6-(pyridoxal phosphate)lysine. Lys-321 carries the post-translational modification N6-acetyllysine.

The protein belongs to the class-IV pyridoxal-phosphate-dependent aminotransferase family. As to quaternary structure, homodimer. It depends on pyridoxal 5'-phosphate as a cofactor.

It localises to the mitochondrion. It carries out the reaction L-leucine + 2-oxoglutarate = 4-methyl-2-oxopentanoate + L-glutamate. It catalyses the reaction L-isoleucine + 2-oxoglutarate = (S)-3-methyl-2-oxopentanoate + L-glutamate. The enzyme catalyses L-valine + 2-oxoglutarate = 3-methyl-2-oxobutanoate + L-glutamate. Functionally, catalyzes the first reaction in the catabolism of the essential branched chain amino acids leucine, isoleucine, and valine. May also function as a transporter of branched chain alpha-keto acids. In Pongo abelii (Sumatran orangutan), this protein is Branched-chain-amino-acid aminotransferase, mitochondrial (BCAT2).